A 361-amino-acid chain; its full sequence is Protein RecA (361 aa).

77–84 (GPESSGKT) serves as a coordination point for ATP.

It belongs to the RecA family.

The protein resides in the cytoplasm. Functionally, can catalyze the hydrolysis of ATP in the presence of single-stranded DNA, the ATP-dependent uptake of single-stranded DNA by duplex DNA, and the ATP-dependent hybridization of homologous single-stranded DNAs. It interacts with LexA causing its activation and leading to its autocatalytic cleavage. This Rhizobium etli protein is Protein RecA.